A 353-amino-acid chain; its full sequence is Photosystem II D2 protein (353 aa).

Position 2 is an N-acetylthreonine (Thr2). Phosphothreonine is present on Thr2. Residues 41 to 61 (CAYFALGGWFTGTTFVTSWYT) traverse the membrane as a helical segment. His118 contacts chlorophyll a. Residues 125-141 (GFMLRQFELARSVQLRP) traverse the membrane as a helical segment. The pheophytin a site is built by Gln130 and Asn143. Residues 153-166 (VFVSVFLIYPLGQS) form a helical membrane-spanning segment. His198 contacts chlorophyll a. The chain crosses the membrane as a helical span at residues 208 to 228 (AALLCAIHGATVENTLFEDGD). His215 and Phe262 together coordinate a plastoquinone. Position 215 (His215) interacts with Fe cation. His269 is a binding site for Fe cation. The helical transmembrane segment at 279–295 (GLWMSALGVVGLALNLR) threads the bilayer.

Belongs to the reaction center PufL/M/PsbA/D family. As to quaternary structure, PSII is composed of 1 copy each of membrane proteins PsbA, PsbB, PsbC, PsbD, PsbE, PsbF, PsbH, PsbI, PsbJ, PsbK, PsbL, PsbM, PsbT, PsbX, PsbY, PsbZ, Psb30/Ycf12, at least 3 peripheral proteins of the oxygen-evolving complex and a large number of cofactors. It forms dimeric complexes. Interacts with PAM68. Requires The D1/D2 heterodimer binds P680, chlorophylls that are the primary electron donor of PSII, and subsequent electron acceptors. It shares a non-heme iron and each subunit binds pheophytin, quinone, additional chlorophylls, carotenoids and lipids. There is also a Cl(-1) ion associated with D1 and D2, which is required for oxygen evolution. The PSII complex binds additional chlorophylls, carotenoids and specific lipids. as cofactor. Post-translationally, phosphorylation occurs in normal plant growth light conditions. Rapid dephosphorylation occurs during heat shock.

The protein resides in the plastid. It localises to the chloroplast thylakoid membrane. The enzyme catalyses 2 a plastoquinone + 4 hnu + 2 H2O = 2 a plastoquinol + O2. Its function is as follows. Photosystem II (PSII) is a light-driven water:plastoquinone oxidoreductase that uses light energy to abstract electrons from H(2)O, generating O(2) and a proton gradient subsequently used for ATP formation. It consists of a core antenna complex that captures photons, and an electron transfer chain that converts photonic excitation into a charge separation. The D1/D2 (PsbA/PsbD) reaction center heterodimer binds P680, the primary electron donor of PSII as well as several subsequent electron acceptors. D2 is needed for assembly of a stable PSII complex. The chain is Photosystem II D2 protein from Arabidopsis thaliana (Mouse-ear cress).